The sequence spans 241 residues: 2-C-methyl-D-erythritol 4-phosphate cytidylyltransferase (241 aa).

Belongs to the IspD/TarI cytidylyltransferase family. IspD subfamily.

It carries out the reaction 2-C-methyl-D-erythritol 4-phosphate + CTP + H(+) = 4-CDP-2-C-methyl-D-erythritol + diphosphate. It functions in the pathway isoprenoid biosynthesis; isopentenyl diphosphate biosynthesis via DXP pathway; isopentenyl diphosphate from 1-deoxy-D-xylulose 5-phosphate: step 2/6. Its function is as follows. Catalyzes the formation of 4-diphosphocytidyl-2-C-methyl-D-erythritol from CTP and 2-C-methyl-D-erythritol 4-phosphate (MEP). The chain is 2-C-methyl-D-erythritol 4-phosphate cytidylyltransferase from Hahella chejuensis (strain KCTC 2396).